The following is a 223-amino-acid chain: Ion-translocating oxidoreductase complex subunit E (223 aa).

The next 6 membrane-spanning stretches (helical) occupy residues 17 to 37, 40 to 60, 70 to 90, 94 to 114, 129 to 149, and 182 to 202; these read NGVLCMLLGMCPTMAMTGTAT, LGMGLATAAVMAASNLMVAMF, IPVYILIVAANVTFVDLGMNA, ELYKVLGLFIPLIVSNCLPLA, FLDGLFMGLGFTLALTAIGAV, and WGILVLILPPGGFLIAGLMVV.

Belongs to the NqrDE/RnfAE family. As to quaternary structure, the complex is composed of six subunits: RnfA, RnfB, RnfC, RnfD, RnfE and RnfG.

The protein resides in the cell inner membrane. Its function is as follows. Part of a membrane-bound complex that couples electron transfer with translocation of ions across the membrane. The polypeptide is Ion-translocating oxidoreductase complex subunit E (Paramagnetospirillum magneticum (strain ATCC 700264 / AMB-1) (Magnetospirillum magneticum)).